The sequence spans 642 residues: Probable serine/threonine-protein kinase drkA (642 aa).

Positions 1 to 23 are cleaved as a signal peptide; the sequence is MKKLPFLIIIIYIFLILISISSS. Residues 24–322 lie on the Extracellular side of the membrane; that stretch reads IDYNYNNDID…KPTISLLKKY (299 aa). The segment covering 106-128 has biased composition (low complexity); it reads SENSGSGSNSNSNSKNTDSSTGP. The disordered stretch occupies residues 106–136; that stretch reads SENSGSGSNSNSNSKNTDSSTGPTPSPISIN. N-linked (GlcNAc...) asparagine glycosylation is found at N136, N140, N158, N244, and N271. The helical transmembrane segment at 323–343 threads the bilayer; the sequence is LIIGFSIVGGLLIIGGCFLLI. Topologically, residues 344 to 642 are cytoplasmic; the sequence is RNRYRSSGYY…SDLQYVRQQL (299 aa). The Protein kinase domain occupies 374-627; sequence IKIGVRIGKG…EQCLERLESI (254 aa). ATP contacts are provided by residues 380–388 and K401; that span reads IGKGNYGEV. The active-site Proton acceptor is D497.

It belongs to the protein kinase superfamily. TKL Ser/Thr protein kinase family.

Its subcellular location is the membrane. The enzyme catalyses L-seryl-[protein] + ATP = O-phospho-L-seryl-[protein] + ADP + H(+). It carries out the reaction L-threonyl-[protein] + ATP = O-phospho-L-threonyl-[protein] + ADP + H(+). The sequence is that of Probable serine/threonine-protein kinase drkA (drkA) from Dictyostelium discoideum (Social amoeba).